The primary structure comprises 311 residues: Formyltransferase/hydrolase complex subunit D (311 aa).

This sequence belongs to the FTR family. In terms of assembly, homotetramer. Octaheteromer. Part of the formyltransferase/hydrolase complex fhc; composed of FhcA, FhcB, FhcC and FhcD.

It is found in the cytoplasm. It carries out the reaction N-formylmethanofuran + 5,6,7,8-tetrahydromethanopterin + H(+) = N(5)-formyl-5,6,7,8-tetrahydromethanopterin + methanofuran. It functions in the pathway one-carbon metabolism; formaldehyde degradation; formate from formaldehyde (H(4)MPT route): step 4/5. Involved in the transformation of 5-formyl tetrahydromethanopterin (5-formyl-H(4)MPT) to methanofuran (MFR) and formate via the intermediate formylmethanofuran (formyl-MFR). Catalyzes the transfer of a formyl group from 5-formyl-H(4)MPT to MFR to produce tetrahydromethanopterin (H(4)MPT) and formyl-MFR, which is then hydrolyzed to formate and MFR. The polypeptide is Formyltransferase/hydrolase complex subunit D (Methylorubrum extorquens (strain ATCC 14718 / DSM 1338 / JCM 2805 / NCIMB 9133 / AM1) (Methylobacterium extorquens)).